The primary structure comprises 178 residues: Acireductone dioxygenase (178 aa).

The tract at residues 1-22 (MKAYWYDNKPGDQREPHDSGRP) is disordered. A compositionally biased stretch (basic and acidic residues) spans 9–22 (KPGDQREPHDSGRP). Fe(2+) contacts are provided by His81, His83, Glu87, and His126. Ni(2+)-binding residues include His81, His83, Glu87, and His126.

This sequence belongs to the acireductone dioxygenase (ARD) family. It depends on Fe(2+) as a cofactor. Requires Ni(2+) as cofactor.

The protein localises to the cytoplasm. It localises to the nucleus. It carries out the reaction 1,2-dihydroxy-5-(methylsulfanyl)pent-1-en-3-one + O2 = 4-methylsulfanyl-2-oxobutanoate + formate + 2 H(+). The catalysed reaction is 1,2-dihydroxy-5-(methylsulfanyl)pent-1-en-3-one + O2 = 3-(methylsulfanyl)propanoate + CO + formate + 2 H(+). The protein operates within amino-acid biosynthesis; L-methionine biosynthesis via salvage pathway; L-methionine from S-methyl-5-thio-alpha-D-ribose 1-phosphate: step 5/6. Its function is as follows. Catalyzes 2 different reactions between oxygen and the acireductone 1,2-dihydroxy-3-keto-5-methylthiopentene (DHK-MTPene) depending upon the metal bound in the active site. Fe-containing acireductone dioxygenase (Fe-ARD) produces formate and 2-keto-4-methylthiobutyrate (KMTB), the alpha-ketoacid precursor of methionine in the methionine recycle pathway. Ni-containing acireductone dioxygenase (Ni-ARD) produces methylthiopropionate, carbon monoxide and formate, and does not lie on the methionine recycle pathway. This chain is Acireductone dioxygenase (adi1), found in Emericella nidulans (strain FGSC A4 / ATCC 38163 / CBS 112.46 / NRRL 194 / M139) (Aspergillus nidulans).